Consider the following 224-residue polypeptide: 2-phospho-L-lactate guanylyltransferase (224 aa).

Belongs to the CofC family. Homodimer.

The enzyme catalyses (2S)-2-phospholactate + GTP + H(+) = (2S)-lactyl-2-diphospho-5'-guanosine + diphosphate. It participates in cofactor biosynthesis; coenzyme F420 biosynthesis. Guanylyltransferase that catalyzes the activation of (2S)-2-phospholactate (2-PL) as (2S)-lactyl-2-diphospho-5'-guanosine, via the condensation of 2-PL with GTP. It is involved in the biosynthesis of coenzyme F420, a hydride carrier cofactor. This chain is 2-phospho-L-lactate guanylyltransferase, found in Methanobrevibacter smithii (strain ATCC 35061 / DSM 861 / OCM 144 / PS).